Consider the following 436-residue polypeptide: Histone acetyltransferase type B subunit 2 (436 aa).

Acidic residues predominate over residues 1-19 (MEPYDDGFIEEQEEQEEER). The disordered stretch occupies residues 1–22 (MEPYDDGFIEEQEEQEEERTEE). WD repeat units lie at residues 136 to 176 (DHKG…SLPT), 187 to 227 (GHTK…KGNK), 237 to 277 (HHSS…TTRA), 284 to 324 (QHRD…TKLH), and 328 to 368 (CHTD…EEQT). Residues 370 to 374 (DDAQD) are interaction with the histone H4 N-terminus. A WD 6 repeat occupies 385–425 (GHTNRISDFSWNLNDPWVLCSAAEDNLLQVWKVADAIVGKD).

Belongs to the WD repeat RBAP46/RBAP48/MSI1 family. Component of the HAT-B complex composed of at least hat1 and hat2. The HAT-B complex binds to histone H4 tail.

The protein localises to the cytoplasm. The protein resides in the nucleus. Functionally, regulatory subunit of the histone acetylase B (HAT-B) complex. The complex acetylates 'Lys-12' of histone H4 which is required for telomeric silencing. The polypeptide is Histone acetyltransferase type B subunit 2 (hat2) (Aspergillus oryzae (strain ATCC 42149 / RIB 40) (Yellow koji mold)).